Here is a 750-residue protein sequence, read N- to C-terminus: uncharacterized protein (750 aa).

3 helical membrane passes run 1 to 21 (MSII…SIVT), 465 to 485 (YGAN…ISYL), and 586 to 606 (GMFG…VAVS).

It is found in the membrane. This is an uncharacterized protein from Saccharomyces cerevisiae (strain ATCC 204508 / S288c) (Baker's yeast).